Consider the following 647-residue polypeptide: Beta-glucosidase-like SFR2, chloroplastic (647 aa).

Residues 116–140 form a disordered region; it reads SAAGDGGSQQSWRSTGGENIGDREQ. Positions 123-132 are enriched in polar residues; it reads SQQSWRSTGG. A glycan (N-linked (GlcNAc...) asparagine) is linked at N169. A beta-D-glucoside-binding positions include H258, 302–303, Y414, E466, W504, 511–512, and F520; these read NE and EW. The active-site Proton donor is E303. The active-site Nucleophile is E466.

Belongs to the glycosyl hydrolase 1 family.

The protein resides in the plastid. The protein localises to the chloroplast outer membrane. The enzyme catalyses 2 a 1,2-diacyl-3-O-(beta-D-galactosyl)-sn-glycerol = a 1,2-diacyl-3-O-[beta-D-galactosyl-(1-&gt;6)-beta-D-galactosyl]-sn-glycerol + a 1,2-diacyl-sn-glycerol. Functionally, galactosyltransferase synthesizing digalactosyldiacylglycerol from monogalactosyldiacylglycerol in the absence of UDP-galactose. Potentially involved in freezing tolerance. The polypeptide is Beta-glucosidase-like SFR2, chloroplastic (Oryza sativa subsp. japonica (Rice)).